The primary structure comprises 498 residues: Transcription factor kayak (498 aa).

Residues 108–127 (ASLGQGSESEDSNASYNDTQ) are compositionally biased toward polar residues. 2 disordered regions span residues 108–144 (ASLGQGSESEDSNASYNDTQMNEEQDTTDTSSAHTDS) and 177–234 (GSAS…KRRV). 2 stretches are compositionally biased toward low complexity: residues 135–144 (TDTSSAHTDS) and 177–191 (GSASVGSSNANTSNT). The bZIP domain maps to 212–275 (EQKRAVRRER…KQLEYLLATH (64 aa)). The interval 214-233 (KRAVRRERNKQAAARCRKRR) is basic motif. Positions 240–247 (LTEEVEQL) are leucine-zipper. Positions 304–325 (AGSSGSGASSHHNHNSNDSSNG) are enriched in low complexity. Disordered regions lie at residues 304–345 (AGSS…SPLD) and 465–498 (TPVSGPLVPNSSSTNKHPLELPTPTAEPSKLVSL). Positions 333–343 (TLNSTGRSNSP) are enriched in polar residues. At Ser342 the chain carries Phosphoserine.

The protein belongs to the bZIP family. Fos subfamily. As to quaternary structure, homodimer. Heterodimer with Jra. The kay-Jra heterodimer binds more stably to the AP-1 site than either of the two proteins alone.

Its subcellular location is the nucleus. Functionally, developmentally regulated transcription factor AP-1 binds and recognizes the enhancer DNA sequence: 5'-TGA[CG]TCA-3'. May play a role in the function or determination of a particular subset of cells in the developing embryo. It is able to carry out its function either independently of or in conjunction with Jra. The chain is Transcription factor kayak from Drosophila simulans (Fruit fly).